Consider the following 227-residue polypeptide: Cytochrome c oxidase subunit 2 (227 aa).

Topologically, residues 1–14 (MAYPHQLGFQDATS) are mitochondrial intermembrane. The helical transmembrane segment at 15-45 (PIMEELLSFHDHTLMIVFLISSLVLYLISLM) threads the bilayer. Residues 46-59 (LTTKLTHTSTMDAQ) are Mitochondrial matrix-facing. A helical membrane pass occupies residues 60–87 (EVETVWTILPAIILIMIALPSLRILYMM). The Mitochondrial intermembrane segment spans residues 88–227 (DEINNPLLTV…SFENWTTSMT (140 aa)). Positions 161, 196, 198, 200, 204, and 207 each coordinate Cu cation. E198 is a binding site for Mg(2+).

Belongs to the cytochrome c oxidase subunit 2 family. Component of the cytochrome c oxidase (complex IV, CIV), a multisubunit enzyme composed of 14 subunits. The complex is composed of a catalytic core of 3 subunits MT-CO1, MT-CO2 and MT-CO3, encoded in the mitochondrial DNA, and 11 supernumerary subunits COX4I, COX5A, COX5B, COX6A, COX6B, COX6C, COX7A, COX7B, COX7C, COX8 and NDUFA4, which are encoded in the nuclear genome. The complex exists as a monomer or a dimer and forms supercomplexes (SCs) in the inner mitochondrial membrane with NADH-ubiquinone oxidoreductase (complex I, CI) and ubiquinol-cytochrome c oxidoreductase (cytochrome b-c1 complex, complex III, CIII), resulting in different assemblies (supercomplex SCI(1)III(2)IV(1) and megacomplex MCI(2)III(2)IV(2)). Found in a complex with TMEM177, COA6, COX18, COX20, SCO1 and SCO2. Interacts with TMEM177 in a COX20-dependent manner. Interacts with COX20. Interacts with COX16. Cu cation is required as a cofactor.

It is found in the mitochondrion inner membrane. It carries out the reaction 4 Fe(II)-[cytochrome c] + O2 + 8 H(+)(in) = 4 Fe(III)-[cytochrome c] + 2 H2O + 4 H(+)(out). Its function is as follows. Component of the cytochrome c oxidase, the last enzyme in the mitochondrial electron transport chain which drives oxidative phosphorylation. The respiratory chain contains 3 multisubunit complexes succinate dehydrogenase (complex II, CII), ubiquinol-cytochrome c oxidoreductase (cytochrome b-c1 complex, complex III, CIII) and cytochrome c oxidase (complex IV, CIV), that cooperate to transfer electrons derived from NADH and succinate to molecular oxygen, creating an electrochemical gradient over the inner membrane that drives transmembrane transport and the ATP synthase. Cytochrome c oxidase is the component of the respiratory chain that catalyzes the reduction of oxygen to water. Electrons originating from reduced cytochrome c in the intermembrane space (IMS) are transferred via the dinuclear copper A center (CU(A)) of subunit 2 and heme A of subunit 1 to the active site in subunit 1, a binuclear center (BNC) formed by heme A3 and copper B (CU(B)). The BNC reduces molecular oxygen to 2 water molecules using 4 electrons from cytochrome c in the IMS and 4 protons from the mitochondrial matrix. The protein is Cytochrome c oxidase subunit 2 (MT-CO2) of Georychus capensis (Cape mole rat).